The primary structure comprises 273 residues: Ribosomal RNA small subunit methyltransferase A (273 aa).

S-adenosyl-L-methionine is bound by residues asparagine 18, leucine 20, glycine 45, glutamate 66, aspartate 91, and asparagine 113.

This sequence belongs to the class I-like SAM-binding methyltransferase superfamily. rRNA adenine N(6)-methyltransferase family. RsmA subfamily.

It is found in the cytoplasm. The catalysed reaction is adenosine(1518)/adenosine(1519) in 16S rRNA + 4 S-adenosyl-L-methionine = N(6)-dimethyladenosine(1518)/N(6)-dimethyladenosine(1519) in 16S rRNA + 4 S-adenosyl-L-homocysteine + 4 H(+). In terms of biological role, specifically dimethylates two adjacent adenosines (A1518 and A1519) in the loop of a conserved hairpin near the 3'-end of 16S rRNA in the 30S particle. May play a critical role in biogenesis of 30S subunits. The sequence is that of Ribosomal RNA small subunit methyltransferase A from Escherichia coli O17:K52:H18 (strain UMN026 / ExPEC).